Consider the following 669-residue polypeptide: Probable potassium transport system protein Kup (669 aa).

A run of 12 helical transmembrane segments spans residues 47–67, 86–106, 144–164, 172–192, 206–226, 252–272, 288–308, 326–346, 378–398, 404–424, 435–455, and 460–480; these read VLML…TSPL, VIGI…IKYM, TIIG…TPAI, GLTL…IFVM, IGVI…LLGI, GMAG…GEAL, WFFV…ALLL, ALLP…QALI, IYIP…VLTF, LAAA…ILAF, LLKS…FFGA, and IPHG…LMTT.

The protein belongs to the HAK/KUP transporter (TC 2.A.72) family.

The protein localises to the cell inner membrane. It catalyses the reaction K(+)(in) + H(+)(in) = K(+)(out) + H(+)(out). Its function is as follows. Transport of potassium into the cell. Likely operates as a K(+):H(+) symporter. This Bdellovibrio bacteriovorus (strain ATCC 15356 / DSM 50701 / NCIMB 9529 / HD100) protein is Probable potassium transport system protein Kup.